Consider the following 334-residue polypeptide: YbbR-like domain-containing protein BB_0009 (334 aa).

A helical transmembrane segment spans residues 22 to 38 (AISILIAILMFVAFNFN). YbbR-like domains are found at residues 43-128 (ITTE…NVLL) and 138-220 (VKIE…VVNI).

The protein resides in the membrane. The protein is YbbR-like domain-containing protein BB_0009 of Borreliella burgdorferi (strain ATCC 35210 / DSM 4680 / CIP 102532 / B31) (Borrelia burgdorferi).